Consider the following 185-residue polypeptide: ATP synthase subunit b 2 (185 aa).

The segment at M1–P26 is disordered. Residues L37–P57 form a helical membrane-spanning segment.

The protein belongs to the ATPase B chain family. As to quaternary structure, F-type ATPases have 2 components, F(1) - the catalytic core - and F(0) - the membrane proton channel. F(1) has five subunits: alpha(3), beta(3), gamma(1), delta(1), epsilon(1). F(0) has three main subunits: a(1), b(2) and c(10-14). The alpha and beta chains form an alternating ring which encloses part of the gamma chain. F(1) is attached to F(0) by a central stalk formed by the gamma and epsilon chains, while a peripheral stalk is formed by the delta and b chains.

The protein localises to the cell inner membrane. F(1)F(0) ATP synthase produces ATP from ADP in the presence of a proton or sodium gradient. F-type ATPases consist of two structural domains, F(1) containing the extramembraneous catalytic core and F(0) containing the membrane proton channel, linked together by a central stalk and a peripheral stalk. During catalysis, ATP synthesis in the catalytic domain of F(1) is coupled via a rotary mechanism of the central stalk subunits to proton translocation. Its function is as follows. Component of the F(0) channel, it forms part of the peripheral stalk, linking F(1) to F(0). The b'-subunit is a diverged and duplicated form of b found in plants and photosynthetic bacteria. This is ATP synthase subunit b 2 (atpF2) from Rhodopseudomonas palustris (strain ATCC BAA-98 / CGA009).